The sequence spans 252 residues: MSRKPFIAGNWKMNKNPEEAKAFVEAVASKLPSADLVEAGIAVPAVDLTTVIAAAKGSNLKVAAQNTYFENSGAFTGETSPQVLKEIGTDYVVIGHSERRDYFHETDEDINKKAKAIFANGMIPIICCGESLETYEAGKAAEFVGAQVSAALAGLTPEQVASSVIAYEPIWAIGTGKSASQDDAQKMCKVVRDVVAADFGQEVADKVRVLYGGSVKPENVAEYMACPDVDGALVGGASLEPESFLALLDFVK.

Asn10–Lys12 contacts substrate. His96 acts as the Electrophile in catalysis. The active-site Proton acceptor is the Glu168. Residues Gly174, Ser214, and Gly235–Gly236 contribute to the substrate site.

The protein belongs to the triosephosphate isomerase family. Homodimer.

The protein resides in the cytoplasm. The catalysed reaction is D-glyceraldehyde 3-phosphate = dihydroxyacetone phosphate. Its pathway is carbohydrate biosynthesis; gluconeogenesis. It functions in the pathway carbohydrate degradation; glycolysis; D-glyceraldehyde 3-phosphate from glycerone phosphate: step 1/1. Functionally, involved in the gluconeogenesis. Catalyzes stereospecifically the conversion of dihydroxyacetone phosphate (DHAP) to D-glyceraldehyde-3-phosphate (G3P). The protein is Triosephosphate isomerase of Streptococcus thermophilus (strain CNRZ 1066).